A 77-amino-acid chain; its full sequence is Putative defensin-like protein 158 (77 aa).

Positions 1 to 24 are cleaved as a signal peptide; sequence MANISWSHFLILMLVFSVVKKGKG. 4 cysteine pairs are disulfide-bonded: C31–C77, C41–C60, C46–C71, and C50–C73.

The protein belongs to the DEFL family.

It localises to the secreted. The sequence is that of Putative defensin-like protein 158 (LCR23) from Arabidopsis thaliana (Mouse-ear cress).